The following is a 140-amino-acid chain: Nucleoside diphosphate kinase (140 aa).

Residues K11, F59, R87, T93, R104, and N114 each coordinate ATP. H117 (pros-phosphohistidine intermediate) is an active-site residue.

Belongs to the NDK family. In terms of assembly, homotetramer. Requires Mg(2+) as cofactor.

The protein localises to the cytoplasm. It catalyses the reaction a 2'-deoxyribonucleoside 5'-diphosphate + ATP = a 2'-deoxyribonucleoside 5'-triphosphate + ADP. The enzyme catalyses a ribonucleoside 5'-diphosphate + ATP = a ribonucleoside 5'-triphosphate + ADP. Functionally, major role in the synthesis of nucleoside triphosphates other than ATP. The ATP gamma phosphate is transferred to the NDP beta phosphate via a ping-pong mechanism, using a phosphorylated active-site intermediate. This Brucella canis (strain ATCC 23365 / NCTC 10854 / RM-666) protein is Nucleoside diphosphate kinase.